Consider the following 336-residue polypeptide: ATP-dependent 6-phosphofructokinase (336 aa).

Gly-11 serves as a coordination point for ATP. An ADP-binding site is contributed by 21–25 (RAVVR). ATP is bound by residues 72–73 (RY) and 102–105 (GDGS). Asp-103 is a binding site for Mg(2+). 125-127 (TID) provides a ligand contact to substrate. The active-site Proton acceptor is Asp-127. Arg-154 contacts ADP. Residues Arg-162 and 169 to 171 (MGR) each bind substrate. ADP-binding positions include 185–187 (GAD), Lys-211, and 213–215 (KKH). Residues Glu-222, Arg-244, and 250–253 (HIQR) contribute to the substrate site.

The protein belongs to the phosphofructokinase type A (PFKA) family. ATP-dependent PFK group I subfamily. Prokaryotic clade 'B1' sub-subfamily. As to quaternary structure, homotetramer. Mg(2+) is required as a cofactor.

Its subcellular location is the cytoplasm. It carries out the reaction beta-D-fructose 6-phosphate + ATP = beta-D-fructose 1,6-bisphosphate + ADP + H(+). Its pathway is carbohydrate degradation; glycolysis; D-glyceraldehyde 3-phosphate and glycerone phosphate from D-glucose: step 3/4. Its activity is regulated as follows. Allosterically activated by ADP and other diphosphonucleosides, and allosterically inhibited by phosphoenolpyruvate. Functionally, catalyzes the phosphorylation of D-fructose 6-phosphate to fructose 1,6-bisphosphate by ATP, the first committing step of glycolysis. The protein is ATP-dependent 6-phosphofructokinase of Streptococcus sanguinis (strain SK36).